The following is a 515-amino-acid chain: Glucose-6-phosphate 1-dehydrogenase (515 aa).

A2 carries the post-translational modification N-acetylalanine. At S8 the chain carries Phosphoserine. Phosphothreonine is present on T10. NADP(+)-binding positions include 38-45 and R72; that span reads GASGDLAK. An N6-acetyllysine modification is found at K89. Residues Y147 and K171 each contribute to the NADP(+) site. Residues K171, 201–205, E239, and D258 each bind D-glucose 6-phosphate; that span reads HYLGK. K171 bears the N6-(2-hydroxyisobutyryl)lysine; alternate mark. Position 171 is an N6-acetyllysine; alternate (K171). The active-site Proton acceptor is the H263. NADP(+) is bound at residue R357. Residues K360 and R365 each coordinate D-glucose 6-phosphate. Positions 366, 370, and 393 each coordinate NADP(+). Q395 is a binding site for D-glucose 6-phosphate. NADP(+) is bound by residues 401–403 and 421–423; these read YTK and DLT. K403 carries the post-translational modification N6-acetyllysine. N6-acetyllysine is present on K432. R487 contributes to the NADP(+) binding site. Position 497 is an N6-acetyllysine (K497). Y503 and W509 together coordinate NADP(+). Position 503 is a phosphotyrosine (Y503).

This sequence belongs to the glucose-6-phosphate dehydrogenase family. Homotetramer; dimer of dimers. Interacts with SIRT2; the interaction is enhanced by H(2)O(2) treatment. Forms a ternary complex with ALDOB and TP53; this interaction is direct. ALDOB stabilizes the complex inhibiting G6PD activity and keeping oxidative pentose phosphate metabolism in check. In terms of processing, acetylated by ELP3 at Lys-403; acetylation inhibits its homodimerization and enzyme activity. Deacetylated by SIRT2 at Lys-403; deacetylation stimulates its enzyme activity.

Its subcellular location is the cytoplasm. The protein localises to the cytosol. It is found in the membrane. The enzyme catalyses D-glucose 6-phosphate + NADP(+) = 6-phospho-D-glucono-1,5-lactone + NADPH + H(+). It participates in carbohydrate degradation; pentose phosphate pathway; D-ribulose 5-phosphate from D-glucose 6-phosphate (oxidative stage): step 1/3. Functionally, cytosolic glucose-6-phosphate dehydrogenase that catalyzes the first and rate-limiting step of the oxidative branch within the pentose phosphate pathway/shunt, an alternative route to glycolysis for the dissimilation of carbohydrates and a major source of reducing power and metabolic intermediates for fatty acid and nucleic acid biosynthetic processes. The protein is Glucose-6-phosphate 1-dehydrogenase (G6pdx) of Rattus norvegicus (Rat).